Here is a 350-residue protein sequence, read N- to C-terminus: tRNA uridine(34) hydroxylase (350 aa).

The 95-residue stretch at 146–240 folds into the Rhodanese domain; that stretch reads DDPDALFIDM…YARKAREQGL (95 aa). The active-site Cysteine persulfide intermediate is cysteine 200.

The protein belongs to the TrhO family.

The enzyme catalyses uridine(34) in tRNA + AH2 + O2 = 5-hydroxyuridine(34) in tRNA + A + H2O. In terms of biological role, catalyzes oxygen-dependent 5-hydroxyuridine (ho5U) modification at position 34 in tRNAs, the first step in 5-carboxymethoxyuridine (cmo5U) biosynthesis. May be part of an alternate pathway, which is able to bypass cmo5U biogenesis in a subset of tRNAs under aerobic conditions. The sequence is that of tRNA uridine(34) hydroxylase from Escherichia coli O81 (strain ED1a).